A 379-amino-acid polypeptide reads, in one-letter code: Queuine tRNA-ribosyltransferase (379 aa).

The Proton acceptor role is filled by Asp-94. Substrate contacts are provided by residues 94-98, Asp-148, Gln-191, and Gly-218; that span reads DSGGF. An RNA binding region spans residues 249 to 255; it reads GVGSPDS. Asp-268 serves as the catalytic Nucleophile. The interval 273–277 is RNA binding; important for wobble base 34 recognition; the sequence is TRIAR. Zn(2+) is bound by residues Cys-306, Cys-308, Cys-311, and His-337.

This sequence belongs to the queuine tRNA-ribosyltransferase family. Homodimer. Within each dimer, one monomer is responsible for RNA recognition and catalysis, while the other monomer binds to the replacement base PreQ1. Zn(2+) is required as a cofactor.

The catalysed reaction is 7-aminomethyl-7-carbaguanine + guanosine(34) in tRNA = 7-aminomethyl-7-carbaguanosine(34) in tRNA + guanine. It participates in tRNA modification; tRNA-queuosine biosynthesis. Catalyzes the base-exchange of a guanine (G) residue with the queuine precursor 7-aminomethyl-7-deazaguanine (PreQ1) at position 34 (anticodon wobble position) in tRNAs with GU(N) anticodons (tRNA-Asp, -Asn, -His and -Tyr). Catalysis occurs through a double-displacement mechanism. The nucleophile active site attacks the C1' of nucleotide 34 to detach the guanine base from the RNA, forming a covalent enzyme-RNA intermediate. The proton acceptor active site deprotonates the incoming PreQ1, allowing a nucleophilic attack on the C1' of the ribose to form the product. After dissociation, two additional enzymatic reactions on the tRNA convert PreQ1 to queuine (Q), resulting in the hypermodified nucleoside queuosine (7-(((4,5-cis-dihydroxy-2-cyclopenten-1-yl)amino)methyl)-7-deazaguanosine). In Bacillus anthracis (strain CDC 684 / NRRL 3495), this protein is Queuine tRNA-ribosyltransferase.